Here is a 448-residue protein sequence, read N- to C-terminus: tRNA-2-methylthio-N(6)-dimethylallyladenosine synthase (448 aa).

In terms of domain architecture, MTTase N-terminal spans 3–118 (KKVFIKTFGC…LPELLNARAA (116 aa)). [4Fe-4S] cluster-binding residues include C12, C49, C81, C155, C159, and C162. One can recognise a Radical SAM core domain in the interval 141–374 (RVEGASAFVS…QAVINRNILE (234 aa)). The TRAM domain maps to 377–440 (QERVGTVQRL…TYTLRGEVVM (64 aa)).

The protein belongs to the methylthiotransferase family. MiaB subfamily. In terms of assembly, monomer. [4Fe-4S] cluster is required as a cofactor.

The protein localises to the cytoplasm. The enzyme catalyses N(6)-dimethylallyladenosine(37) in tRNA + (sulfur carrier)-SH + AH2 + 2 S-adenosyl-L-methionine = 2-methylsulfanyl-N(6)-dimethylallyladenosine(37) in tRNA + (sulfur carrier)-H + 5'-deoxyadenosine + L-methionine + A + S-adenosyl-L-homocysteine + 2 H(+). Functionally, catalyzes the methylthiolation of N6-(dimethylallyl)adenosine (i(6)A), leading to the formation of 2-methylthio-N6-(dimethylallyl)adenosine (ms(2)i(6)A) at position 37 in tRNAs that read codons beginning with uridine. This Acidovorax sp. (strain JS42) protein is tRNA-2-methylthio-N(6)-dimethylallyladenosine synthase.